The chain runs to 121 residues: Prefoldin subunit beta (121 aa).

This sequence belongs to the prefoldin subunit beta family. In terms of assembly, heterohexamer of two alpha and four beta subunits.

The protein localises to the cytoplasm. Its function is as follows. Molecular chaperone capable of stabilizing a range of proteins. Seems to fulfill an ATP-independent, HSP70-like function in archaeal de novo protein folding. This chain is Prefoldin subunit beta (pfdB), found in Methanothermobacter thermautotrophicus (strain ATCC 29096 / DSM 1053 / JCM 10044 / NBRC 100330 / Delta H) (Methanobacterium thermoautotrophicum).